Consider the following 97-residue polypeptide: MRIPPPLSNNKNRNRRYKRSQFEVIFEILHIIKEGEQIKTRIMYAANLDWRNFSKYIDFLISNGFIKKNKEKFELTELGKKLYSSLYELFEIMNSKP.

This is an uncharacterized protein from Methanocaldococcus jannaschii (strain ATCC 43067 / DSM 2661 / JAL-1 / JCM 10045 / NBRC 100440) (Methanococcus jannaschii).